Reading from the N-terminus, the 184-residue chain is uncharacterized protein (184 aa).

This is an uncharacterized protein from Archaeoglobus fulgidus (strain ATCC 49558 / DSM 4304 / JCM 9628 / NBRC 100126 / VC-16).